Consider the following 137-residue polypeptide: Large ribosomal subunit protein uL16 (137 aa).

The segment covering 1 to 17 (MLQPKRTKFRKQQKGRN) has biased composition (basic residues). Residues 1-21 (MLQPKRTKFRKQQKGRNRGQA) form a disordered region.

The protein belongs to the universal ribosomal protein uL16 family. In terms of assembly, part of the 50S ribosomal subunit.

Binds 23S rRNA and is also seen to make contacts with the A and possibly P site tRNAs. This is Large ribosomal subunit protein uL16 from Nitrosococcus oceani (strain ATCC 19707 / BCRC 17464 / JCM 30415 / NCIMB 11848 / C-107).